Consider the following 404-residue polypeptide: Cysteine desulfurase IscS (404 aa).

Pyridoxal 5'-phosphate contacts are provided by residues A75–T76, N155, Q183, and S203–H205. Residue K206 is modified to N6-(pyridoxal phosphate)lysine. Residue T243 participates in pyridoxal 5'-phosphate binding. The Cysteine persulfide intermediate role is filled by C328. [2Fe-2S] cluster is bound at residue C328.

Belongs to the class-V pyridoxal-phosphate-dependent aminotransferase family. NifS/IscS subfamily. In terms of assembly, homodimer. Forms a heterotetramer with IscU, interacts with other sulfur acceptors. It depends on pyridoxal 5'-phosphate as a cofactor.

Its subcellular location is the cytoplasm. It catalyses the reaction (sulfur carrier)-H + L-cysteine = (sulfur carrier)-SH + L-alanine. The protein operates within cofactor biosynthesis; iron-sulfur cluster biosynthesis. Functionally, master enzyme that delivers sulfur to a number of partners involved in Fe-S cluster assembly, tRNA modification or cofactor biosynthesis. Catalyzes the removal of elemental sulfur atoms from cysteine to produce alanine. Functions as a sulfur delivery protein for Fe-S cluster synthesis onto IscU, an Fe-S scaffold assembly protein, as well as other S acceptor proteins. The sequence is that of Cysteine desulfurase IscS from Shewanella halifaxensis (strain HAW-EB4).